A 460-amino-acid polypeptide reads, in one-letter code: Serine incorporator 5 (460 aa).

At 1 to 36 (MSARCCAGQLACCCGSAGCALCCGCCPKFRQSRSTR) the chain is on the extracellular side. The helical transmembrane segment at 37-57 (FMYLFYFTLVIIPCCVMMSPS) threads the bilayer. Residues 58 to 89 (VMKQMTEHIPFFEDFCKGIKAGDTCENLVGYS) are Cytoplasmic-facing. The helical transmembrane segment at 90 to 110 (AVYRVCFGMACFFFVFCVLTF) threads the bilayer. The Extracellular segment spans residues 111–124 (KVNNSKSCRASIHN). The N-linked (GlcNAc...) asparagine glycan is linked to asparagine 113. A helical membrane pass occupies residues 125 to 145 (GFWFFKLLLLGAMCSGAFFIP). Topologically, residues 146–156 (DQETFLNVWRY) are cytoplasmic. The chain crosses the membrane as a helical span at residues 157-177 (VGAVGSFFFICIQLLLIVEFA). Over 178-197 (HKWNKNWTAGTVRNKLWYAS) the chain is Extracellular. Asparagine 183 is a glycosylation site (N-linked (GlcNAc...) asparagine). A helical membrane pass occupies residues 198 to 218 (LSLALIMYSIAVGGLALMAVF). Over 219 to 229 (YTQWDDCMDNK) the chain is Cytoplasmic. Residues 230 to 250 (ILLGVHGGLCVLISLAAISPC) form a helical membrane-spanning segment. At 251–258 (VQNRQPHS) the chain is on the extracellular side. A helical transmembrane segment spans residues 259 to 279 (GLLQPGLISCYVTYLTFSALT). Over 280-309 (SKPEKVVKDEHGKNVTICVPDFGQDFRRDE) the chain is Cytoplasmic. A helical membrane pass occupies residues 310–330 (SMVTWLGTLLLVVCISYSCLT). At 331 to 390 (STTRSSSDALQRRYGAPELEVARCCFCFGPDGEDTEEQQNVKEGPRVIYDEKKGTVYSYS) the chain is on the extracellular side. A helical transmembrane segment spans residues 391-411 (YFHFVLLLASLYVMMTLTSWF). Residues 412-427 (HYENATIETFFVGSWS) lie on the Cytoplasmic side of the membrane. The chain crosses the membrane as a helical span at residues 428–448 (IFWVKMASCWMCVLLYLWTLV). Residues 449–460 (APLCCPSRQFSV) are Extracellular-facing.

This sequence belongs to the TDE1 family. As to expression, brain. Expressed at high levels in the white matter and the oligodendroglial cells of the brain. Expressed at low levels in the liver.

Its subcellular location is the cell membrane. It catalyses the reaction a 1,2-diacyl-sn-glycero-3-phospho-L-serine(in) = a 1,2-diacyl-sn-glycero-3-phospho-L-serine(out). It carries out the reaction a 1,2-diacyl-sn-glycero-3-phosphocholine(in) = a 1,2-diacyl-sn-glycero-3-phosphocholine(out). The catalysed reaction is a 1,2-diacyl-sn-glycero-3-phosphoethanolamine(in) = a 1,2-diacyl-sn-glycero-3-phosphoethanolamine(out). Restriction factor required to restrict infectivity of gammaretroviruses: acts by inhibiting an early step of viral infection. Impairs the penetration of the viral particle into the cytoplasm. Non-ATP-dependent, non-specific lipid transporter for phosphatidylserine, phosphatidylcholine, and phosphatidylethanolamine. Functions as a scramblase that flips lipids in both directions across the membrane. Phospholipid scrambling results in gammaretroviral surface exposure of phosphatidylserine and loss of membrane asymmetry, which leads to loss of infectivity. Enhances the incorporation of serine into phosphatidylserine and sphingolipids. May play a role in providing serine molecules for the formation of myelin glycosphingolipids in oligodendrocytes. This Rattus norvegicus (Rat) protein is Serine incorporator 5 (Serinc5).